Reading from the N-terminus, the 147-residue chain is Cytochrome c-type biogenesis protein CcmE (147 aa).

At 1–7 (MTVRQRR) the chain is on the cytoplasmic side. The chain crosses the membrane as a helical; Signal-anchor for type II membrane protein span at residues 8-28 (FAMVILVVIGVSIATGLGLKA). Residues 29 to 147 (FQENILFFYN…KTKANTEDKL (119 aa)) lie on the Periplasmic side of the membrane. Positions 123 and 127 each coordinate heme.

Belongs to the CcmE/CycJ family.

Its subcellular location is the cell inner membrane. Functionally, heme chaperone required for the biogenesis of c-type cytochromes. Transiently binds heme delivered by CcmC and transfers the heme to apo-cytochromes in a process facilitated by CcmF and CcmH. This is Cytochrome c-type biogenesis protein CcmE from Nitrosococcus oceani (strain ATCC 19707 / BCRC 17464 / JCM 30415 / NCIMB 11848 / C-107).